The chain runs to 247 residues: Proteasome subunit alpha (247 aa).

It belongs to the peptidase T1A family. As to quaternary structure, the 20S proteasome core is composed of 14 alpha and 14 beta subunits that assemble into four stacked heptameric rings, resulting in a barrel-shaped structure. The two inner rings, each composed of seven catalytic beta subunits, are sandwiched by two outer rings, each composed of seven alpha subunits. The catalytic chamber with the active sites is on the inside of the barrel. Has a gated structure, the ends of the cylinder being occluded by the N-termini of the alpha-subunits. Is capped at one or both ends by the proteasome regulatory ATPase, PAN.

It localises to the cytoplasm. The formation of the proteasomal ATPase PAN-20S proteasome complex, via the docking of the C-termini of PAN into the intersubunit pockets in the alpha-rings, triggers opening of the gate for substrate entry. Interconversion between the open-gate and close-gate conformations leads to a dynamic regulation of the 20S proteasome proteolysis activity. Functionally, component of the proteasome core, a large protease complex with broad specificity involved in protein degradation. The protein is Proteasome subunit alpha of Methanosarcina acetivorans (strain ATCC 35395 / DSM 2834 / JCM 12185 / C2A).